The chain runs to 66 residues: Movement protein TGBp3 (66 aa).

The Lumenal segment spans residues Met-1 to Asp-2. A helical membrane pass occupies residues Phe-3–Ile-23. At Asn-24 to Ile-66 the chain is on the cytoplasmic side.

It belongs to the Tymovirales TGBp3 protein family.

The protein localises to the host endoplasmic reticulum membrane. Plays a role in viral cell-to-cell propagation, by facilitating genome transport to neighboring plant cells through plasmosdesmata. May induce the formation of granular vesicles derived from the Endoplasmic reticulum, which align on actin filaments. This is Movement protein TGBp3 from Trifolium (WCMV).